A 250-amino-acid chain; its full sequence is Hydroxyacylglutathione hydrolase (250 aa).

Zn(2+)-binding residues include histidine 53, histidine 55, aspartate 57, histidine 58, histidine 111, aspartate 128, and histidine 166.

This sequence belongs to the metallo-beta-lactamase superfamily. Glyoxalase II family. As to quaternary structure, monomer. Zn(2+) is required as a cofactor.

The enzyme catalyses an S-(2-hydroxyacyl)glutathione + H2O = a 2-hydroxy carboxylate + glutathione + H(+). It participates in secondary metabolite metabolism; methylglyoxal degradation; (R)-lactate from methylglyoxal: step 2/2. Its function is as follows. Thiolesterase that catalyzes the hydrolysis of S-D-lactoyl-glutathione to form glutathione and D-lactic acid. This is Hydroxyacylglutathione hydrolase from Methylobacillus flagellatus (strain ATCC 51484 / DSM 6875 / VKM B-1610 / KT).